Consider the following 249-residue polypeptide: MSAIQRLTGKTAVITGGATGIGFAAAKRFIEEGAFVFIFGRRQEKLDAATAALGPNSRAVQGSVTELADLDRLYEAVKAERGSLDIVMANAGAGMATPLGKITGEQCDIVFGTNLKGTIFTIQGALPLMAQAGGGSIILTGSSSGTTGAPPLSVYGASKAAIRNLARSWAGTLRDEGIRINVLSPASIATEIAKEALGEQGMKMFAQQNPLKRMGQPEEVGAVAAFLASSDSSFMTASEVSVDGGLAQI.

The NADP(+) site is built by Ile-21, Lys-45, Asn-90, Tyr-155, Lys-159, Ile-188, and Thr-190. The active-site Proton acceptor is Tyr-155. Lys-159 serves as the catalytic Lowers pKa of active site Tyr.

Belongs to the short-chain dehydrogenases/reductases (SDR) family.

Its function is as follows. Oxidoreductase; part of the gene cluster that mediates the biosynthesis of xenovulene A, an unusual meroterpenoid that has potent inhibitory effects on the human gamma-aminobutyrate A (GABAA) benzodiazepine receptor. The first step of xenovulene A biosynthesis is the biosynthesis of 3-methylorcinaldehyde performed by the non-reducing polyketide synthase aspks1. The salicylate hydroxylase asL1 then catalyzes the oxidative dearomatization of 3-methylorcinaldehyde to yield a dearomatized hydroxycyclohexadione. The 2-oxoglutarate-dependent dioxygenase asL3 further catalyzes the oxidative ring expansion to provide the first tropolone metabolite. The cytochrome P450 monooxygenase asR2 allows the synthesis of tropolone hemiacetal. In parallel, a previously unrecognised class of terpene cyclase, asR6, produces alpha-humulene from farnesylpyrophosphate (FPP). The putative Diels-Alderase asR5 probably catalyzes the formation of the tropolone-humulene skeleton by linking humulene and the polyketide moiety. Oxidative-ring contractions catalyzed by asL4 and asL6 then processively remove carbon atoms from the polyketide to yield xenovulene A. This Sarocladium schorii (Acremonium strictum (strain IMI 501407)) protein is Oxidoreductase asL5.